Reading from the N-terminus, the 462-residue chain is Nitrogenase iron-iron protein beta chain (462 aa).

[8Fe-7S] cluster-binding residues include Cys-20, Cys-45, Cys-104, and Ser-143.

The protein belongs to the NifD/NifK/NifE/NifN family. Hexamer of two alpha, two beta, and two delta chains. Requires [8Fe-7S] cluster as cofactor.

The catalysed reaction is N2 + 8 reduced [2Fe-2S]-[ferredoxin] + 16 ATP + 16 H2O = H2 + 8 oxidized [2Fe-2S]-[ferredoxin] + 2 NH4(+) + 16 ADP + 16 phosphate + 6 H(+). In terms of biological role, this iron-iron protein is part of the nitrogenase complex that catalyzes the key enzymatic reactions in nitrogen fixation. Other nitrogenase complexes utilize a molybdenum-iron protein or a vanadium-iron protein. The sequence is that of Nitrogenase iron-iron protein beta chain (anfK) from Azotobacter vinelandii.